Here is a 395-residue protein sequence, read N- to C-terminus: Flap endonuclease 1 (395 aa).

Positions 1 to 108 (MGILGLSKLL…DELEMRRQKA (108 aa)) are N-domain. Asp-34 serves as a coordination point for Mg(2+). Residue Arg-74 coordinates DNA. The Mg(2+) site is built by Asp-90, Glu-162, Glu-164, Asp-183, and Asp-185. Residues 126–257 (MMEKMSKRTV…QKAWEGIQRY (132 aa)) form an I-domain region. Position 162 (Glu-162) interacts with DNA. Residues Gly-235 and Asp-237 each coordinate DNA. Asp-237 contributes to the Mg(2+) binding site. The segment at 340–348 (TQGRLDSFF) is interaction with PCNA.

It belongs to the XPG/RAD2 endonuclease family. FEN1 subfamily. Interacts with PCNA. Three molecules of FEN1 bind to one PCNA trimer with each molecule binding to one PCNA monomer. PCNA stimulates the nuclease activity without altering cleavage specificity. Requires Mg(2+) as cofactor. Phosphorylated. Phosphorylation upon DNA damage induces relocalization to the nuclear plasma.

The protein resides in the nucleus. It is found in the nucleolus. Its subcellular location is the nucleoplasm. It localises to the mitochondrion. Structure-specific nuclease with 5'-flap endonuclease and 5'-3' exonuclease activities involved in DNA replication and repair. During DNA replication, cleaves the 5'-overhanging flap structure that is generated by displacement synthesis when DNA polymerase encounters the 5'-end of a downstream Okazaki fragment. It enters the flap from the 5'-end and then tracks to cleave the flap base, leaving a nick for ligation. Also involved in the long patch base excision repair (LP-BER) pathway, by cleaving within the apurinic/apyrimidinic (AP) site-terminated flap. Acts as a genome stabilization factor that prevents flaps from equilibrating into structures that lead to duplications and deletions. Also possesses 5'-3' exonuclease activity on nicked or gapped double-stranded DNA, and exhibits RNase H activity. Also involved in replication and repair of rDNA and in repairing mitochondrial DNA. This chain is Flap endonuclease 1, found in Leishmania infantum.